We begin with the raw amino-acid sequence, 569 residues long: Pyrophosphate--fructose 6-phosphate 1-phosphotransferase subunit beta (569 aa).

Gly-107 contacts diphosphate. Mg(2+) is bound at residue Asp-201. Substrate is bound by residues 229 to 231 (TID), 268 to 269 (KY), 276 to 278 (MGR), Glu-337, and 442 to 445 (YEGR). Asp-231 functions as the Proton acceptor in the catalytic mechanism.

It belongs to the phosphofructokinase type A (PFKA) family. PPi-dependent PFK group II subfamily. Clade 'Long' sub-subfamily. As to quaternary structure, tetramer of two alpha (regulatory) and two beta (catalytic) chains. It depends on Mg(2+) as a cofactor.

It localises to the cytoplasm. It catalyses the reaction beta-D-fructose 6-phosphate + diphosphate = beta-D-fructose 1,6-bisphosphate + phosphate + H(+). It participates in carbohydrate degradation; glycolysis; D-glyceraldehyde 3-phosphate and glycerone phosphate from D-glucose: step 3/4. Allosterically activated by fructose 2,6-bisphosphate. Its function is as follows. Catalytic subunit of pyrophosphate--fructose 6-phosphate 1-phosphotransferase. Catalyzes the phosphorylation of D-fructose 6-phosphate, the first committing step of glycolysis. Uses inorganic phosphate (PPi) as phosphoryl donor instead of ATP like common ATP-dependent phosphofructokinases (ATP-PFKs), which renders the reaction reversible, and can thus function both in glycolysis and gluconeogenesis. The protein is Pyrophosphate--fructose 6-phosphate 1-phosphotransferase subunit beta of Solanum tuberosum (Potato).